We begin with the raw amino-acid sequence, 387 residues long: Postreplication repair E3 ubiquitin-protein ligase rad18 (387 aa).

The RING-type zinc-finger motif lies at 29–67; that stretch reads CLICHEYFRAPLITSCSHTFCSFCIRDYLREHPMCPACR. The disordered stretch occupies residues 119–153; the sequence is DSASGDEEWEDDLASNSSPASIAKKTSRDSKKRKR. Residues 122-131 are compositionally biased toward acidic residues; the sequence is SGDEEWEDDL. The segment at 156–183 adopts a UBZ4-type zinc-finger fold; it reads LVHCPACSNLVPHNQINQHLDSCLNSPS. Zn(2+) contacts are provided by Cys-159, Cys-162, His-174, and Cys-178. The disordered stretch occupies residues 174 to 206; sequence HLDSCLNSPSSPSSSSSPYKNKDNSKSNSLLSF. Low complexity predominate over residues 177 to 192; it reads SCLNSPSSPSSSSSPY. An SAP domain is found at 240–274; it reads YALLSESKIRSKLSEMGLPTDGHKQLLQRRHAKWV. The interval 335 to 387 is disordered; the sequence is KQSTTNKNDSLRNTAVESSTEPSTSNGFPATSVSPPLTIDLTNSQTGSDGPQS.

It belongs to the RAD18 family. As to quaternary structure, interacts with E2 ubc2, forming a complex with ubiquitin ligase activity.

The protein localises to the nucleus. It catalyses the reaction S-ubiquitinyl-[E2 ubiquitin-conjugating enzyme]-L-cysteine + [acceptor protein]-L-lysine = [E2 ubiquitin-conjugating enzyme]-L-cysteine + N(6)-ubiquitinyl-[acceptor protein]-L-lysine.. It participates in protein modification; protein ubiquitination. Functionally, E3 RING-finger protein, member of the UBC2/RAD6 epistasis group. Associates to the E2 ubiquitin conjugating enzyme ubc2/rad6 to form the ubc2-rad18 ubiquitin ligase complex involved in postreplicative repair (PRR) of damaged DNA. The protein is Postreplication repair E3 ubiquitin-protein ligase rad18 (rhp18) of Schizosaccharomyces pombe (strain 972 / ATCC 24843) (Fission yeast).